Consider the following 151-residue polypeptide: 1,4-dihydroxy-2-naphthoyl-CoA hydrolase (151 aa).

Residue Asp-23 is part of the active site.

It belongs to the 4-hydroxybenzoyl-CoA thioesterase family. DHNA-CoA hydrolase subfamily.

It carries out the reaction 1,4-dihydroxy-2-naphthoyl-CoA + H2O = 1,4-dihydroxy-2-naphthoate + CoA + H(+). It functions in the pathway cofactor biosynthesis; phylloquinone biosynthesis. It participates in quinol/quinone metabolism; 1,4-dihydroxy-2-naphthoate biosynthesis; 1,4-dihydroxy-2-naphthoate from chorismate: step 7/7. Its function is as follows. Catalyzes the hydrolysis of 1,4-dihydroxy-2-naphthoyl-CoA (DHNA-CoA) to 1,4-dihydroxy-2-naphthoate (DHNA), a reaction involved in phylloquinone (vitamin K1) biosynthesis. The protein is 1,4-dihydroxy-2-naphthoyl-CoA hydrolase of Prochlorococcus marinus (strain MIT 9211).